Here is a 287-residue protein sequence, read N- to C-terminus: MSYNVRAAIIGGTGLYSLEGMELIEEIFPDTPWGKPSDKIKIGKYKGKLIAFLPRHGIGHFLSPPEVPNHANICALKQLGVEEIVAFSSVGSLREEIKPLDFVLPSQIIDRTRFRNSTYFGNGVVAHAPFAEPFSPNLSKRIAQTAKKIGLEIHLDKTLVCMEGPLFSTKAESHLYRSWGADIINMTVLPEAKLAREAEIAYQMICMSTDYDCWREGEESVTVEMVIANLTKNAETAKKLLSELIHVLGNGDDLSLKNSTRYSIITAPEKRNSETVKKLRVLFPEYF.

Phosphate-binding positions include threonine 13 and 55–56 (RH). Methionine 186 provides a ligand contact to substrate. Phosphate is bound at residue threonine 187. A substrate-binding site is contributed by 210–212 (DYD).

It belongs to the PNP/MTAP phosphorylase family. MTAP subfamily. In terms of assembly, homohexamer. Dimer of a homotrimer.

The enzyme catalyses S-methyl-5'-thioadenosine + phosphate = 5-(methylsulfanyl)-alpha-D-ribose 1-phosphate + adenine. It functions in the pathway amino-acid biosynthesis; L-methionine biosynthesis via salvage pathway; S-methyl-5-thio-alpha-D-ribose 1-phosphate from S-methyl-5'-thioadenosine (phosphorylase route): step 1/1. Catalyzes the reversible phosphorylation of S-methyl-5'-thioadenosine (MTA) to adenine and 5-methylthioribose-1-phosphate. Involved in the breakdown of MTA, a major by-product of polyamine biosynthesis. Responsible for the first step in the methionine salvage pathway after MTA has been generated from S-adenosylmethionine. Has broad substrate specificity with 6-aminopurine nucleosides as preferred substrates. This chain is S-methyl-5'-thioadenosine phosphorylase, found in Leptospira interrogans serogroup Icterohaemorrhagiae serovar Lai (strain 56601).